A 525-amino-acid polypeptide reads, in one-letter code: Light-independent protochlorophyllide reductase subunit B (525 aa).

Residue aspartate 36 participates in [4Fe-4S] cluster binding. Aspartate 286 (proton donor) is an active-site residue. 421-422 (GL) serves as a coordination point for substrate.

Belongs to the ChlB/BchB/BchZ family. In terms of assembly, protochlorophyllide reductase is composed of three subunits; ChlL, ChlN and ChlB. Forms a heterotetramer of two ChlB and two ChlN subunits. Requires [4Fe-4S] cluster as cofactor.

The catalysed reaction is chlorophyllide a + oxidized 2[4Fe-4S]-[ferredoxin] + 2 ADP + 2 phosphate = protochlorophyllide a + reduced 2[4Fe-4S]-[ferredoxin] + 2 ATP + 2 H2O. Its pathway is porphyrin-containing compound metabolism; chlorophyll biosynthesis (light-independent). Its function is as follows. Component of the dark-operative protochlorophyllide reductase (DPOR) that uses Mg-ATP and reduced ferredoxin to reduce ring D of protochlorophyllide (Pchlide) to form chlorophyllide a (Chlide). This reaction is light-independent. The NB-protein (ChlN-ChlB) is the catalytic component of the complex. The sequence is that of Light-independent protochlorophyllide reductase subunit B from Prochlorococcus marinus (strain NATL1A).